The following is a 549-amino-acid chain: Hydroxylamine reductase (549 aa).

Cysteine 5, cysteine 8, cysteine 17, and cysteine 23 together coordinate [4Fe-4S] cluster. Residues histidine 250, glutamate 274, cysteine 318, cysteine 404, cysteine 432, cysteine 457, glutamate 491, and lysine 493 each coordinate hybrid [4Fe-2O-2S] cluster. A Cysteine persulfide modification is found at cysteine 404.

The protein belongs to the HCP family. [4Fe-4S] cluster is required as a cofactor. Requires hybrid [4Fe-2O-2S] cluster as cofactor.

It is found in the cytoplasm. It catalyses the reaction A + NH4(+) + H2O = hydroxylamine + AH2 + H(+). Its function is as follows. Catalyzes the reduction of hydroxylamine to form NH(3) and H(2)O. In Geobacter metallireducens (strain ATCC 53774 / DSM 7210 / GS-15), this protein is Hydroxylamine reductase.